Here is a 322-residue protein sequence, read N- to C-terminus: Acetyl-coenzyme A carboxylase carboxyl transferase subunit alpha (322 aa).

The 255-residue stretch at 43–297 folds into the CoA carboxyltransferase C-terminal domain; sequence ALKSKSNALT…KEVLTQQLNK (255 aa).

The protein belongs to the AccA family. Acetyl-CoA carboxylase is a heterohexamer composed of biotin carboxyl carrier protein (AccB), biotin carboxylase (AccC) and two subunits each of ACCase subunit alpha (AccA) and ACCase subunit beta (AccD).

It localises to the cytoplasm. The catalysed reaction is N(6)-carboxybiotinyl-L-lysyl-[protein] + acetyl-CoA = N(6)-biotinyl-L-lysyl-[protein] + malonyl-CoA. It participates in lipid metabolism; malonyl-CoA biosynthesis; malonyl-CoA from acetyl-CoA: step 1/1. Functionally, component of the acetyl coenzyme A carboxylase (ACC) complex. First, biotin carboxylase catalyzes the carboxylation of biotin on its carrier protein (BCCP) and then the CO(2) group is transferred by the carboxyltransferase to acetyl-CoA to form malonyl-CoA. This is Acetyl-coenzyme A carboxylase carboxyl transferase subunit alpha from Vesicomyosocius okutanii subsp. Calyptogena okutanii (strain HA).